The chain runs to 139 residues: Large ribosomal subunit protein uL16 (139 aa).

This sequence belongs to the universal ribosomal protein uL16 family. In terms of assembly, part of the 50S ribosomal subunit.

Its function is as follows. Binds 23S rRNA and is also seen to make contacts with the A and possibly P site tRNAs. The sequence is that of Large ribosomal subunit protein uL16 from Parvibaculum lavamentivorans (strain DS-1 / DSM 13023 / NCIMB 13966).